The primary structure comprises 602 residues: Elongation factor 4 (602 aa).

The region spanning 7 to 189 (KYIRNFSIVA…AIVNKVPAPE (183 aa)) is the tr-type G domain. Residues 19–24 (DHGKST) and 136–139 (NKID) each bind GTP.

It belongs to the TRAFAC class translation factor GTPase superfamily. Classic translation factor GTPase family. LepA subfamily.

It is found in the cell membrane. The enzyme catalyses GTP + H2O = GDP + phosphate + H(+). Required for accurate and efficient protein synthesis under certain stress conditions. May act as a fidelity factor of the translation reaction, by catalyzing a one-codon backward translocation of tRNAs on improperly translocated ribosomes. Back-translocation proceeds from a post-translocation (POST) complex to a pre-translocation (PRE) complex, thus giving elongation factor G a second chance to translocate the tRNAs correctly. Binds to ribosomes in a GTP-dependent manner. In Clostridium botulinum (strain Okra / Type B1), this protein is Elongation factor 4.